The sequence spans 344 residues: Succinylglutamate desuccinylase (344 aa).

Residues His-63, Glu-66, and His-160 each coordinate Zn(2+). Glu-224 is a catalytic residue.

It belongs to the AspA/AstE family. Succinylglutamate desuccinylase subfamily. It depends on Zn(2+) as a cofactor.

It carries out the reaction N-succinyl-L-glutamate + H2O = L-glutamate + succinate. It functions in the pathway amino-acid degradation; L-arginine degradation via AST pathway; L-glutamate and succinate from L-arginine: step 5/5. In terms of biological role, transforms N(2)-succinylglutamate into succinate and glutamate. In Shewanella sp. (strain MR-7), this protein is Succinylglutamate desuccinylase.